Consider the following 86-residue polypeptide: Progonadoliberin-2 (86 aa).

The first 24 residues, Met1–Ser24, serve as a signal peptide directing secretion. Gln25 carries the post-translational modification Pyrrolidone carboxylic acid. Residue Gly34 is modified to Glycine amide.

Belongs to the GnRH family.

The protein localises to the secreted. Functionally, stimulates the secretion of gonadotropins. The sequence is that of Progonadoliberin-2 (gnrh2) from Oncorhynchus mykiss (Rainbow trout).